The chain runs to 433 residues: Dihydroorotase (433 aa).

Zn(2+) is bound by residues His-63 and His-65. Residues His-65–Arg-67 and Asn-97 each bind substrate. Zn(2+) contacts are provided by Asp-155, His-182, and His-235. Residue Asn-283 participates in substrate binding. Position 310 (Asp-310) interacts with Zn(2+). The active site involves Asp-310. Position 314 (His-314) interacts with substrate.

Belongs to the metallo-dependent hydrolases superfamily. DHOase family. Class I DHOase subfamily. Zn(2+) serves as cofactor.

It carries out the reaction (S)-dihydroorotate + H2O = N-carbamoyl-L-aspartate + H(+). It functions in the pathway pyrimidine metabolism; UMP biosynthesis via de novo pathway; (S)-dihydroorotate from bicarbonate: step 3/3. In terms of biological role, catalyzes the reversible cyclization of carbamoyl aspartate to dihydroorotate. This Anaeromyxobacter sp. (strain K) protein is Dihydroorotase.